A 237-amino-acid polypeptide reads, in one-letter code: Ribose-5-phosphate isomerase A (237 aa).

Residues 30-33 (SGST), 87-90 (DGAD), and 100-103 (KGGG) each bind substrate. The Proton acceptor role is filled by Glu-109. Lys-127 provides a ligand contact to substrate.

This sequence belongs to the ribose 5-phosphate isomerase family. As to quaternary structure, homodimer.

The enzyme catalyses aldehydo-D-ribose 5-phosphate = D-ribulose 5-phosphate. It functions in the pathway carbohydrate degradation; pentose phosphate pathway; D-ribose 5-phosphate from D-ribulose 5-phosphate (non-oxidative stage): step 1/1. In terms of biological role, catalyzes the reversible conversion of ribose-5-phosphate to ribulose 5-phosphate. This is Ribose-5-phosphate isomerase A from Prochlorococcus marinus (strain MIT 9211).